The chain runs to 649 residues: Serine/threonine kinase-like domain-containing protein STKLD1 (649 aa).

Residues 1 to 13 (MLGPESDGRRPTQ) show a composition bias toward basic and acidic residues. A disordered region spans residues 1 to 23 (MLGPESDGRRPTQGERGPGYPGE). One can recognise a Protein kinase domain in the interval 28 to 379 (YQVLYQLNPG…CNQAITSAVL (352 aa)). ATP-binding positions include 34–42 (LNPGALGVN) and K57. Residues 621 to 640 (FSKPGLPPGGSPQPGCTASG) form a disordered region.

Belongs to the protein kinase superfamily. Ser/Thr protein kinase family. STKL subfamily.

This chain is Serine/threonine kinase-like domain-containing protein STKLD1 (STKLD1), found in Macaca fascicularis (Crab-eating macaque).